The following is a 546-amino-acid chain: Apolipoprotein N-acyltransferase 1 (546 aa).

7 helical membrane-spanning segments follow: residues 14 to 34, 41 to 61, 62 to 82, 85 to 105, 122 to 142, 151 to 171, and 194 to 214; these read FLLF…PLLP, AYGA…FAVV, FWGG…LFVF, VALC…CLAL, LVWL…PYGV, LPLI…LVVF, and FLSA…LCGF. Residues 233-502 form the CN hydrolase domain; the sequence is AKVALVQPNG…PGVLVADVPI (270 aa). E280 (proton acceptor) is an active-site residue. The active site involves K361. The active-site Nucleophile is C413. A helical membrane pass occupies residues 514–534; it reads GDALGVFFCVASLFILIAGGV.

Belongs to the CN hydrolase family. Apolipoprotein N-acyltransferase subfamily.

It localises to the cell inner membrane. It carries out the reaction N-terminal S-1,2-diacyl-sn-glyceryl-L-cysteinyl-[lipoprotein] + a glycerophospholipid = N-acyl-S-1,2-diacyl-sn-glyceryl-L-cysteinyl-[lipoprotein] + a 2-acyl-sn-glycero-3-phospholipid + H(+). It participates in protein modification; lipoprotein biosynthesis (N-acyl transfer). In terms of biological role, catalyzes the phospholipid dependent N-acylation of the N-terminal cysteine of apolipoprotein, the last step in lipoprotein maturation. In Treponema pallidum (strain Nichols), this protein is Apolipoprotein N-acyltransferase 1.